Consider the following 463-residue polypeptide: Glutamate--tRNA ligase (463 aa).

The 'HIGH' region motif lies at 10-20 (PSPTGHLHIGG). The 'KMSKS' region motif lies at 236–240 (KLSKR). Lys-239 is an ATP binding site.

This sequence belongs to the class-I aminoacyl-tRNA synthetase family. Glutamate--tRNA ligase type 1 subfamily. Monomer.

Its subcellular location is the cytoplasm. It carries out the reaction tRNA(Glu) + L-glutamate + ATP = L-glutamyl-tRNA(Glu) + AMP + diphosphate. Catalyzes the attachment of glutamate to tRNA(Glu) in a two-step reaction: glutamate is first activated by ATP to form Glu-AMP and then transferred to the acceptor end of tRNA(Glu). The protein is Glutamate--tRNA ligase of Nitratidesulfovibrio vulgaris (strain ATCC 29579 / DSM 644 / CCUG 34227 / NCIMB 8303 / VKM B-1760 / Hildenborough) (Desulfovibrio vulgaris).